We begin with the raw amino-acid sequence, 274 residues long: MNPEHSPLGKATVYASQYDASLLFPIPRAGAREQIGITSALPFFGTDIWNAYELSWLNARGKPQVAVATFYVPAESPNIVESKSFKLYLGSFAQSKFDSVDAVRDVLKRDVSAACGASVSVQLVSPHDFGKLEMDELDGLSLDRLDLDADVYEPDPSLLSAAEDEAPVEETLVSDLLKSNCPVTGQPDWGSVQIHYVGPQIDHAGLLRYIISFRNHTGFHEQCVERIFLDILHRCKPVKLAVYARYTRRGGLDINPFRTNYNQPMPDNARTARQ.

Substrate is bound at residue 80 to 82 (VES). Residue 82–83 (SK) coordinates NADPH. C181 functions as the Thioimide intermediate in the catalytic mechanism. Catalysis depends on D188, which acts as the Proton donor. 220–221 (HE) serves as a coordination point for substrate. NADPH is bound at residue 249-250 (RG).

This sequence belongs to the GTP cyclohydrolase I family. QueF type 2 subfamily. In terms of assembly, homodimer.

It is found in the cytoplasm. It catalyses the reaction 7-aminomethyl-7-carbaguanine + 2 NADP(+) = 7-cyano-7-deazaguanine + 2 NADPH + 3 H(+). Its pathway is tRNA modification; tRNA-queuosine biosynthesis. Its function is as follows. Catalyzes the NADPH-dependent reduction of 7-cyano-7-deazaguanine (preQ0) to 7-aminomethyl-7-deazaguanine (preQ1). The polypeptide is NADPH-dependent 7-cyano-7-deazaguanine reductase (Burkholderia multivorans (strain ATCC 17616 / 249)).